A 632-amino-acid chain; its full sequence is Phosphomethylpyrimidine synthase (632 aa).

Substrate is bound by residues Asn-237, Met-266, Tyr-295, His-331, 351–353 (SRG), 392–395 (DGLR), and Glu-431. A Zn(2+)-binding site is contributed by His-435. Tyr-458 provides a ligand contact to substrate. Position 499 (His-499) interacts with Zn(2+). Residues Cys-579, Cys-582, and Cys-587 each contribute to the [4Fe-4S] cluster site.

It belongs to the ThiC family. Homodimer. It depends on [4Fe-4S] cluster as a cofactor.

It catalyses the reaction 5-amino-1-(5-phospho-beta-D-ribosyl)imidazole + S-adenosyl-L-methionine = 4-amino-2-methyl-5-(phosphooxymethyl)pyrimidine + CO + 5'-deoxyadenosine + formate + L-methionine + 3 H(+). It participates in cofactor biosynthesis; thiamine diphosphate biosynthesis. Its function is as follows. Catalyzes the synthesis of the hydroxymethylpyrimidine phosphate (HMP-P) moiety of thiamine from aminoimidazole ribotide (AIR) in a radical S-adenosyl-L-methionine (SAM)-dependent reaction. This is Phosphomethylpyrimidine synthase from Nitrosomonas eutropha (strain DSM 101675 / C91 / Nm57).